A 569-amino-acid chain; its full sequence is Archaeosine synthase (569 aa).

In terms of domain architecture, PUA spans 495–569 (SGGKDINYIE…ALVNIRNVKS (75 aa)).

This sequence belongs to the archaeosine synthase type 1 family. Homodimer.

The catalysed reaction is 7-cyano-7-carbaguanosine(15) in tRNA + L-glutamine + H2O = archaeosine(15) in tRNA + L-glutamate. The protein operates within tRNA modification; archaeosine-tRNA biosynthesis. Is responsible for the final step in the biosynthesis of archaeosine, a modified nucleoside present in the dihydrouridine loop (D-loop) of archaeal tRNA. Catalyzes the conversion of 7-cyano-7-deazaguanine (preQ0)-modified tRNA to archaeosine-tRNA, transforming a nitrile group to a formamidine group. Can use either glutamine, asparagine or ammonium as amino donor. This chain is Archaeosine synthase, found in Methanocaldococcus jannaschii (strain ATCC 43067 / DSM 2661 / JAL-1 / JCM 10045 / NBRC 100440) (Methanococcus jannaschii).